We begin with the raw amino-acid sequence, 356 residues long: Alpha-N-acetylneuraminide alpha-2,8-sialyltransferase (356 aa).

Topologically, residues 1 to 29 are cytoplasmic; the sequence is MSPCGRARRQTSRGAMAVLAWKFPRTRLP. The helical; Signal-anchor for type II membrane protein transmembrane segment at 30 to 48 threads the bilayer; sequence MGASALCVVVLCWLYIFPV. The Lumenal portion of the chain corresponds to 49 to 356; the sequence is YRLPNEKEIV…CEDTSLQPTS (308 aa). Residues Asn-71 and Asn-119 are each glycosylated (N-linked (GlcNAc...) asparagine). Disulfide bonds link Cys-138–Cys-287 and Cys-152–Cys-347. Residues Asn-143 and Asn-166 each contribute to the CMP-N-acetyl-beta-neuraminate site. N-linked (GlcNAc...) asparagine glycans are attached at residues Asn-214 and Asn-245. CMP-N-acetyl-beta-neuraminate-binding residues include Ser-274, Thr-275, Gly-276, Trp-296, and His-310. His-322 acts as the Proton donor/acceptor in catalysis.

Belongs to the glycosyltransferase 29 family. In terms of tissue distribution, strongly expressed in melanoma cell lines, adult and fetal brain and to a lesser extent in adult and fetal lung.

It is found in the golgi apparatus membrane. It carries out the reaction an N-acetyl-alpha-neuraminyl-(2-&gt;3)-beta-D-galactosyl derivative + CMP-N-acetyl-beta-neuraminate = an N-acetyl-alpha-neuraminyl-(2-&gt;8)-N-acetyl-alpha-neuraminyl-(2-&gt;3)-beta-D-galactosyl derivative + CMP + H(+). It catalyses the reaction a ganglioside GM3 (d18:1(4E)) + CMP-N-acetyl-beta-neuraminate = a ganglioside GD3 (d18:1(4E)) + CMP + H(+). The enzyme catalyses a ganglioside GD3 (d18:1(4E)) + CMP-N-acetyl-beta-neuraminate = a ganglioside GT3 (d18:1(4E)) + CMP + H(+). The catalysed reaction is a ganglioside GD1a (d18:1(4E)) + CMP-N-acetyl-beta-neuraminate = a ganglioside GT1a (d18:1(4E)) + CMP + H(+). It carries out the reaction a ganglioside GT1b (d18:1(4E)) + CMP-N-acetyl-beta-neuraminate = a ganglioside GQ1b (d18:1(4E)) + CMP + H(+). It catalyses the reaction a ganglioside GM1b (d18:1(4E)) + CMP-N-acetyl-beta-neuraminate = a ganglioside GD1c (d18:1(4E)) + CMP + H(+). The enzyme catalyses a ganglioside GD3 + CMP-N-acetyl-beta-neuraminate = a ganglioside GT3 + CMP + H(+). The catalysed reaction is [alpha-N-acetylneuraminyl-(2-&gt;8)](n)-alpha-N-acetylneuraminyl-(2-&gt;8)-alpha-N-acetylneuraminyl-(2-&gt;3)-beta-D-galactosyl-(1-&gt;4)-beta-D-glucosyl-(1&lt;-&gt;1)-ceramide + CMP-N-acetyl-beta-neuraminate = [alpha-N-acetylneuraminyl-(2-&gt;8)](n+1)-alpha-N-acetylneuraminyl-(2-&gt;8)-alpha-N-acetylneuraminyl-(2-&gt;3)-beta-D-galactosyl-(1-&gt;4)-beta-D-glucosyl-(1&lt;-&gt;1)-ceramide + CMP + H(+). Its pathway is protein modification; protein glycosylation. The protein operates within lipid metabolism; sphingolipid metabolism. Functionally, catalyzes the addition of sialic acid in alpha 2,8-linkage to the sialic acid moiety of the ganglioside GM3 to form ganglioside GD3; gangliosides are a subfamily of complex glycosphingolipds that contain one or more residues of sialic acid. Can catalyze the addition of a second alpha-2,8-sialic acid to GD3 to form GT3. Can use GM1b, GD1a and GT1b as acceptor substrates to synthesize GD1c, GT1a and GQ1b respectively. Can synthesize unusual tetra- and pentasialylated lactosylceramide derivatives identified as GQ3 (II3Neu5Ac4-Gg2Cer) and GP3 (II3Neu5Ac5-Gg2Cer) in breast cancer cells. This is Alpha-N-acetylneuraminide alpha-2,8-sialyltransferase from Homo sapiens (Human).